The sequence spans 175 residues: Snake venom metalloproteinase BpMP-1 (175 aa).

Residues 1–175 (YIELAVVADH…KHNPQCILNK (175 aa)) form the Peptidase M12B domain. 2 residues coordinate Ca(2+): glutamate 3 and aspartate 74. Disulfide bonds link cysteine 98–cysteine 171, cysteine 131–cysteine 155, and cysteine 133–cysteine 138. Residue histidine 117 coordinates Zn(2+). Glutamate 118 is an active-site residue. Residues histidine 121 and histidine 127 each coordinate Zn(2+). Cysteine 171 and asparagine 174 together coordinate Ca(2+).

Belongs to the venom metalloproteinase (M12B) family. P-I subfamily. In terms of assembly, monomer. Zn(2+) serves as cofactor. In terms of tissue distribution, expressed by the venom gland.

The protein resides in the secreted. Inhibited by EDTA, 1,10-phenanthroline and beta-mercaptoethanol. Not inhibited by the serine protease inhibitors aprotinin and benzamidin. Its function is as follows. Non-hemorrhagic snake venom zinc metalloprotease that hydrolyzes the Aalpha-chain of fibrinogen, more slowly the Bbeta-chain and shows no effect on the gamma chain. Has no coagulant activity on bovine plasma and fibrinogen. The polypeptide is Snake venom metalloproteinase BpMP-1 (Bothrops pauloensis (Neuwied's lancehead)).